The following is a 447-amino-acid chain: Cysteine--tRNA ligase (447 aa).

Zn(2+) is bound at residue C28. Positions 30–40 match the 'HIGH' region motif; that stretch reads PTVYNYIHIGN. Positions 211, 236, and 240 each coordinate Zn(2+). Positions 268 to 272 match the 'KMSKS' region motif; sequence KMSKS. ATP is bound at residue K271.

This sequence belongs to the class-I aminoacyl-tRNA synthetase family. In terms of assembly, monomer. Zn(2+) serves as cofactor.

Its subcellular location is the cytoplasm. It catalyses the reaction tRNA(Cys) + L-cysteine + ATP = L-cysteinyl-tRNA(Cys) + AMP + diphosphate. This is Cysteine--tRNA ligase from Streptococcus pyogenes serotype M18 (strain MGAS8232).